The sequence spans 372 residues: Hydrogenase-2 small chain (372 aa).

The tat-type signal signal peptide spans methionine 1 to alanine 37. The [4Fe-4S] cluster site is built by cysteine 59, cysteine 62, cysteine 157, cysteine 191, histidine 229, cysteine 232, cysteine 257, and cysteine 263. [3Fe-4S] cluster-binding residues include cysteine 272, cysteine 292, and cysteine 295.

This sequence belongs to the [NiFe]/[NiFeSe] hydrogenase small subunit family. Heterodimer of a large and a small subunit. Requires [4Fe-4S] cluster as cofactor. [3Fe-4S] cluster is required as a cofactor. In terms of processing, predicted to be exported by the Tat system. The position of the signal peptide cleavage has not been experimentally proven.

The protein resides in the cell membrane. Its subcellular location is the periplasm. It carries out the reaction H2 + A = AH2. In terms of biological role, this is one of three E.coli hydrogenases synthesized in response to different physiological conditions. HYD2 is involved in hydrogen uptake. The chain is Hydrogenase-2 small chain (hybO) from Escherichia coli O157:H7.